Reading from the N-terminus, the 531-residue chain is Bifunctional protein TrpGD (531 aa).

The 194-residue stretch at 3–196 (DILLLDNIDS…LAWAQQKLEP (194 aa)) folds into the Glutamine amidotransferase type-1 domain. Position 57-59 (57-59 (GPG)) interacts with L-glutamine. The active-site Nucleophile; for GATase activity is Cys-84. L-glutamine contacts are provided by residues Gln-88 and 134-135 (SL). Residues His-170 and Glu-172 each act as for GATase activity in the active site. The tract at residues 202–531 (PILEKLYQAQ…DRVTALAARG (330 aa)) is anthranilate phosphoribosyltransferase.

The protein in the C-terminal section; belongs to the anthranilate phosphoribosyltransferase family. As to quaternary structure, monomer. Heterotetramer consisting of two non-identical subunits: a beta subunit (TrpG) and a large alpha subunit (TrpE).

The enzyme catalyses chorismate + L-glutamine = anthranilate + pyruvate + L-glutamate + H(+). The catalysed reaction is N-(5-phospho-beta-D-ribosyl)anthranilate + diphosphate = 5-phospho-alpha-D-ribose 1-diphosphate + anthranilate. Its pathway is amino-acid biosynthesis; L-tryptophan biosynthesis; L-tryptophan from chorismate: step 1/5. It functions in the pathway amino-acid biosynthesis; L-tryptophan biosynthesis; L-tryptophan from chorismate: step 2/5. Its activity is regulated as follows. Cooperatively feedback inhibited by tryptophan. Its function is as follows. Part of a heterotetrameric complex that catalyzes the two-step biosynthesis of anthranilate, an intermediate in the biosynthesis of L-tryptophan. In the first step, the glutamine-binding beta subunit (TrpG) of anthranilate synthase (AS) provides the glutamine amidotransferase activity which generates ammonia as a substrate that, along with chorismate, is used in the second step, catalyzed by the large alpha subunit of AS (TrpE) to produce anthranilate. In the absence of TrpG, TrpE can synthesize anthranilate directly from chorismate and high concentrations of ammonia. In addition to synthesizing anthranilate, it also catalyzes the second step of the pathway, the transfer of the phosphoribosyl group of 5-phosphorylribose-1-pyrophosphate (PRPP) to anthranilate. This is Bifunctional protein TrpGD (trpGD) from Salmonella typhimurium (strain LT2 / SGSC1412 / ATCC 700720).